We begin with the raw amino-acid sequence, 556 residues long: MAKYCLKKTSKRVSCAKRYKIEKKVRDHNRKVKKEAKKNGTTNKKEKTISVPNSCPFKEEILVQAEQEREKIKVRQEAAKEAAKIHRIEKRKNNLPANFESMVAKASKQGTEFDKKVASAAEHEKFNTLDDKTIKAYASEVRKTVEIADVIIQVLDARDPLGSRSKSVEDQVLKGGKRLVLLLNKIDLVPRENVQKWLEYLRGQFPTIAFKASTQEQKSNIGRFNSAILNNTETSKCVGADIVMKILANYCRNKDIKTSIRVGVVGFPNVGKSSVINSLKRRKACNVGNLPGITKEIQEVELDKNIRLIDSPGVILVSQKDLDPIEVALKNAIRVDNLLDPIAPVHAILRRCSKETIMLHYNLADFNSVDQFLAQLARRIGKLRRGARPDVNAAAKRVLNDWNTGKLRYYTHPPEQGTAKEDIVVPAEVVSQFSKEFDIDAIAEEQNQIVEGLPMESDIIAPHNSDEEEDDDDEMETDVNEKKQTVTSGRKVKGPTKDDDKPVLPESLALEGNVQLNKLIKTAIKKQKKKSKKTANRADKLSDSLGNMLGGDAMEM.

The tract at residues 29–50 (NRKVKKEAKKNGTTNKKEKTIS) is disordered. Residues 58–95 (KEEILVQAEQEREKIKVRQEAAKEAAKIHRIEKRKNNL) are a coiled coil. Residues 138 to 317 (ASEVRKTVEI…LIDSPGVILV (180 aa)) enclose the CP-type G domain. GTP contacts are provided by residues 184-187 (NKID), 266-273 (GFPNVGKS), and 310-313 (DSPG). Disordered stretches follow at residues 461-508 (APHN…PESL) and 525-556 (KKQKKKSKKTANRADKLSDSLGNMLGGDAMEM). The span at 466 to 478 (DEEEDDDDEMETD) shows a compositional bias: acidic residues. The segment covering 525 to 535 (KKQKKKSKKTA) has biased composition (basic residues).

The protein belongs to the TRAFAC class YlqF/YawG GTPase family.

The protein resides in the nucleus. May play a role in regulating cellular proliferation in both germline and somatic tissues. This chain is Guanine nucleotide-binding protein-like 3 homolog, found in Caenorhabditis elegans.